A 481-amino-acid polypeptide reads, in one-letter code: Phosphoglycerate kinase 1, chloroplastic (481 aa).

The transit peptide at 1 to 75 (MASAAASSAF…VRGKGSRGVV (75 aa)) directs the protein to the chloroplast. S81 bears the Phosphoserine mark. (2R)-3-phosphoglycerate-binding residues include A99, D100, N102, R116, T138, H139, G141, R142, R197, H229, and R230. G275 contributes to the ADP binding site. G275 serves as a coordination point for CDP. 2 residues coordinate AMP: K277 and K281. Residue K281 coordinates ATP. G299 lines the ADP pocket. G299 is a binding site for CDP. Positions 300 and 372 each coordinate AMP. ATP-binding residues include G300 and G372. Residues G397 and F402 each contribute to the CDP site. F402 serves as a coordination point for ADP. Position 403 (E403) interacts with AMP. The ATP site is built by E403, D434, and S435. A Mg(2+)-binding site is contributed by D434.

The protein belongs to the phosphoglycerate kinase family. Monomer. Binds to FTSZ2-1 and FTSZ2-2. Mg(2+) is required as a cofactor.

It localises to the plastid. It is found in the chloroplast. It catalyses the reaction (2R)-3-phosphoglycerate + ATP = (2R)-3-phospho-glyceroyl phosphate + ADP. It functions in the pathway carbohydrate biosynthesis; Calvin cycle. Functionally, may trigger the phosphorylation of FTSZ2-1 and FTSZ2-2. The chain is Phosphoglycerate kinase 1, chloroplastic from Arabidopsis thaliana (Mouse-ear cress).